A 167-amino-acid chain; its full sequence is MNEEKRGLCMNIRYLKNVLRKARKIDDTIQLSLNSAKWEYPEGKVHETQEERCQNVKKKLFEGWLSRDQFLKECQTIVRSQLDQDRNTSKSPLKSQQQLPSSSTTQVSERLDPYAKEVQVQLSPPEEVQIVLQSELSVEQIIRDQTWEVLTNACPGMFKDWRDTYKD.

The interval 81-108 is disordered; that stretch reads QLDQDRNTSKSPLKSQQQLPSSSTTQVS. The segment covering 89 to 106 has biased composition (low complexity); sequence SKSPLKSQQQLPSSSTTQ.

The protein belongs to the MIX23 family.

The sequence is that of Protein MIX23 (cid2) from Schizosaccharomyces pombe (strain 972 / ATCC 24843) (Fission yeast).